The following is a 251-amino-acid chain: Triosephosphate isomerase (251 aa).

9 to 11 (NWK) is a binding site for substrate. His96 acts as the Electrophile in catalysis. Glu166 acts as the Proton acceptor in catalysis. Substrate is bound by residues Gly172, Ser212, and 233 to 234 (GG).

This sequence belongs to the triosephosphate isomerase family. Homodimer.

Its subcellular location is the cytoplasm. It carries out the reaction D-glyceraldehyde 3-phosphate = dihydroxyacetone phosphate. Its pathway is carbohydrate biosynthesis; gluconeogenesis. It functions in the pathway carbohydrate degradation; glycolysis; D-glyceraldehyde 3-phosphate from glycerone phosphate: step 1/1. Its function is as follows. Involved in the gluconeogenesis. Catalyzes stereospecifically the conversion of dihydroxyacetone phosphate (DHAP) to D-glyceraldehyde-3-phosphate (G3P). In Pelodictyon phaeoclathratiforme (strain DSM 5477 / BU-1), this protein is Triosephosphate isomerase.